The chain runs to 35 residues: Pheromone-binding protein 1 (35 aa).

This sequence belongs to the PBP/GOBP family. Homodimer. As to expression, antenna.

In terms of biological role, this major soluble protein in olfactory sensilla of male moths might serve to solubilize the extremely hydrophobic pheromone molecules and to transport pheromone through the aqueous lymph to receptors located on olfactory cilia. This chain is Pheromone-binding protein 1, found in Lymantria dispar (Gypsy moth).